The following is a 256-amino-acid chain: Trans-aconitate 2-methyltransferase (256 aa).

It belongs to the methyltransferase superfamily. Tam family.

Its subcellular location is the cytoplasm. The catalysed reaction is trans-aconitate + S-adenosyl-L-methionine = (E)-3-(methoxycarbonyl)pent-2-enedioate + S-adenosyl-L-homocysteine. Functionally, catalyzes the S-adenosylmethionine monomethyl esterification of trans-aconitate. This Agrobacterium fabrum (strain C58 / ATCC 33970) (Agrobacterium tumefaciens (strain C58)) protein is Trans-aconitate 2-methyltransferase.